Reading from the N-terminus, the 654-residue chain is Probable Xaa-Pro aminopeptidase P (654 aa).

4 residues coordinate Mn(2+): D451, D462, E560, and E574.

Belongs to the peptidase M24B family. Mn(2+) is required as a cofactor.

It catalyses the reaction Release of any N-terminal amino acid, including proline, that is linked to proline, even from a dipeptide or tripeptide.. Its function is as follows. Catalyzes the removal of a penultimate prolyl residue from the N-termini of peptides. This Botryotinia fuckeliana (strain B05.10) (Noble rot fungus) protein is Probable Xaa-Pro aminopeptidase P (ampp).